The primary structure comprises 479 residues: Dynein regulatory complex subunit 4 (479 aa).

3 coiled-coil regions span residues 28 to 93, 117 to 170, and 210 to 347; these read RDQL…LADI, RAEA…FNEK, and EVEE…GLKE.

It belongs to the DRC4 family.

Its subcellular location is the cytoplasm. It is found in the cytoskeleton. It localises to the flagellum basal body. Its function is as follows. Cytoskeletal linker which probably functions in axonemal and non-axonemal dynein regulation. May play a role in the spermatozoa motility. This Drosophila melanogaster (Fruit fly) protein is Dynein regulatory complex subunit 4.